A 229-amino-acid polypeptide reads, in one-letter code: Artemin (229 aa).

Residue A1 is modified to N-acetylalanine. A Ferritin-like diiron domain is found at 25–173 (HNFDPECEKA…DCLSNLHCIG (149 aa)).

Belongs to the ferritin family.

The polypeptide is Artemin (Artemia salina (Brine shrimp)).